The sequence spans 132 residues: uncharacterized protein (132 aa).

WD repeat units lie at residues 14–53 (DLQD…LEIL) and 58–97 (AHDD…LANV).

This is an uncharacterized protein from Acanthamoeba polyphaga (Amoeba).